The primary structure comprises 128 residues: MSKPKRERSLPENEAKAIARMLRVSPQKLNLVAQLIRGRKASAALADLQFSRKRIAGDVKKCLESAIANAENNHDLDVDELVVAQAFVGNGMVMKRFAPRGRGRSGRIYKPFSQLTIVVRQVEAEASA.

It belongs to the universal ribosomal protein uL22 family. As to quaternary structure, part of the 50S ribosomal subunit.

In terms of biological role, this protein binds specifically to 23S rRNA; its binding is stimulated by other ribosomal proteins, e.g. L4, L17, and L20. It is important during the early stages of 50S assembly. It makes multiple contacts with different domains of the 23S rRNA in the assembled 50S subunit and ribosome. Its function is as follows. The globular domain of the protein is located near the polypeptide exit tunnel on the outside of the subunit, while an extended beta-hairpin is found that lines the wall of the exit tunnel in the center of the 70S ribosome. This Nitrobacter hamburgensis (strain DSM 10229 / NCIMB 13809 / X14) protein is Large ribosomal subunit protein uL22.